A 98-amino-acid polypeptide reads, in one-letter code: Integration host factor subunit alpha (98 aa).

Positions 51–71 (NFDLRDKNERPGRNPKTGEDI) are disordered. Over residues 53–69 (DLRDKNERPGRNPKTGE) the composition is skewed to basic and acidic residues.

It belongs to the bacterial histone-like protein family. In terms of assembly, heterodimer of an alpha and a beta chain.

Its function is as follows. This protein is one of the two subunits of integration host factor, a specific DNA-binding protein that functions in genetic recombination as well as in transcriptional and translational control. The sequence is that of Integration host factor subunit alpha from Vibrio parahaemolyticus serotype O3:K6 (strain RIMD 2210633).